A 579-amino-acid chain; its full sequence is Nuclear receptor coactivator 5 (579 aa).

Position 1 is an N-acetylmethionine (M1). A disordered region spans residues M1–V78. The transcription repression stretch occupies residues M1–P158. At T3 the chain carries Phosphothreonine. A phosphoserine mark is found at S9, S21, S24, S29, and S34. Basic and acidic residues-rich tracts occupy residues T11–D62 and D68–V78. A phosphoserine mark is found at S96, S116, S126, S143, and S151. Residues Y148–E173 are disordered. Over residues S164–E173 the composition is skewed to basic and acidic residues. T274 carries the post-translational modification Phosphothreonine. Residues L345–L349 carry the LXXLL motif motif. Disordered stretches follow at residues M375 to Q428, V444 to N537, and Q560 to Y579. S378 bears the Phosphoserine mark. At T379 the chain carries Phosphothreonine. The residue at position 381 (S381) is a Phosphoserine. Positions S395–V413 are enriched in polar residues. The segment covering A446–A457 has biased composition (low complexity). The transcription activation stretch occupies residues G458–Y579. Polar residues-rich tracts occupy residues N459–P485 and S520–N537.

As to quaternary structure, binds HTATIP2/TIP30. Interacts with YLPM1. Forms a complex with ILF2, ILF3, YLPM1, KHDRBS1, RBMX and PPP1CA. As to expression, widely expressed.

The protein localises to the nucleus. Its function is as follows. Nuclear receptor coregulator that can have both coactivator and corepressor functions. Interacts with nuclear receptors for steroids (ESR1 and ESR2) independently of the steroid binding domain (AF-2) of the ESR receptors, and with the orphan nuclear receptor NR1D2. Involved in the coactivation of nuclear steroid receptors (ER) as well as the corepression of MYC in response to 17-beta-estradiol (E2). In Homo sapiens (Human), this protein is Nuclear receptor coactivator 5 (NCOA5).